A 257-amino-acid polypeptide reads, in one-letter code: Acetylglutamate kinase (257 aa).

Residues 43-44 (GG), R65, and N157 each bind substrate. ATP-binding positions include 180-185 (DVSGIL) and 208-210 (IIT).

This sequence belongs to the acetylglutamate kinase family. ArgB subfamily. Homodimer.

It is found in the cytoplasm. The catalysed reaction is N-acetyl-L-glutamate + ATP = N-acetyl-L-glutamyl 5-phosphate + ADP. The protein operates within amino-acid biosynthesis; L-arginine biosynthesis; N(2)-acetyl-L-ornithine from L-glutamate: step 2/4. In terms of biological role, catalyzes the ATP-dependent phosphorylation of N-acetyl-L-glutamate. The polypeptide is Acetylglutamate kinase (Photorhabdus laumondii subsp. laumondii (strain DSM 15139 / CIP 105565 / TT01) (Photorhabdus luminescens subsp. laumondii)).